Reading from the N-terminus, the 588-residue chain is 2-succinyl-5-enolpyruvyl-6-hydroxy-3-cyclohexene-1-carboxylate synthase (588 aa).

Positions 1 to 22 (MTTTGSLPAQPSSTSPRTGNPS) are disordered.

Belongs to the TPP enzyme family. MenD subfamily. As to quaternary structure, homodimer. Mg(2+) is required as a cofactor. The cofactor is Mn(2+). Requires thiamine diphosphate as cofactor.

It carries out the reaction isochorismate + 2-oxoglutarate + H(+) = 5-enolpyruvoyl-6-hydroxy-2-succinyl-cyclohex-3-ene-1-carboxylate + CO2. The protein operates within quinol/quinone metabolism; 1,4-dihydroxy-2-naphthoate biosynthesis; 1,4-dihydroxy-2-naphthoate from chorismate: step 2/7. Its pathway is quinol/quinone metabolism; menaquinone biosynthesis. Functionally, catalyzes the thiamine diphosphate-dependent decarboxylation of 2-oxoglutarate and the subsequent addition of the resulting succinic semialdehyde-thiamine pyrophosphate anion to isochorismate to yield 2-succinyl-5-enolpyruvyl-6-hydroxy-3-cyclohexene-1-carboxylate (SEPHCHC). The protein is 2-succinyl-5-enolpyruvyl-6-hydroxy-3-cyclohexene-1-carboxylate synthase of Clavibacter michiganensis subsp. michiganensis (strain NCPPB 382).